The primary structure comprises 100 residues: Colipase-like protein 2 (100 aa).

The first 21 residues, 1 to 21 (MAAALALVAGVLSGAVLPLWS), serve as a signal peptide directing secretion. Cystine bridges form between C34-C45, C40-C56, C44-C78, C66-C86, and C80-C97.

It belongs to the colipase family.

The protein resides in the secreted. This Homo sapiens (Human) protein is Colipase-like protein 2 (CLPSL2).